The primary structure comprises 256 residues: Large ribosomal subunit protein eL8A (256 aa).

The disordered stretch occupies residues Met1–Gly37. Residues Ser16–Lys32 show a composition bias toward polar residues.

It belongs to the eukaryotic ribosomal protein eL8 family. Component of the large ribosomal subunit (LSU). Mature yeast ribosomes consist of a small (40S) and a large (60S) subunit. The 40S small subunit contains 1 molecule of ribosomal RNA (18S rRNA) and 33 different proteins (encoded by 57 genes). The large 60S subunit contains 3 rRNA molecules (25S, 5.8S and 5S rRNA) and 46 different proteins (encoded by 81 genes).

The protein localises to the cytoplasm. In terms of biological role, component of the ribosome, a large ribonucleoprotein complex responsible for the synthesis of proteins in the cell. The small ribosomal subunit (SSU) binds messenger RNAs (mRNAs) and translates the encoded message by selecting cognate aminoacyl-transfer RNA (tRNA) molecules. The large subunit (LSU) contains the ribosomal catalytic site termed the peptidyl transferase center (PTC), which catalyzes the formation of peptide bonds, thereby polymerizing the amino acids delivered by tRNAs into a polypeptide chain. The nascent polypeptides leave the ribosome through a tunnel in the LSU and interact with protein factors that function in enzymatic processing, targeting, and the membrane insertion of nascent chains at the exit of the ribosomal tunnel. The sequence is that of Large ribosomal subunit protein eL8A from Saccharomyces cerevisiae (strain ATCC 204508 / S288c) (Baker's yeast).